The sequence spans 238 residues: Small ribosomal subunit protein eS4 (238 aa).

The 64-residue stretch at 38 to 101 (LPLALIIRDV…GEVYRVVPDA (64 aa)) folds into the S4 RNA-binding domain.

This sequence belongs to the eukaryotic ribosomal protein eS4 family.

This is Small ribosomal subunit protein eS4 from Pyrobaculum aerophilum (strain ATCC 51768 / DSM 7523 / JCM 9630 / CIP 104966 / NBRC 100827 / IM2).